Here is a 126-residue protein sequence, read N- to C-terminus: Fluoride-specific ion channel FluC (126 aa).

The next 4 helical transmembrane spans lie at 4–24, 35–55, 68–88, and 100–120; these read ILAIALGAAIGANLRYGIGLW, YGTFIINLLGCLGIGLLLTLI, MLVTGLLGGFTTFSTFGYESF, and IGYMVGSVVGGLIAVIIGVGL. Na(+) is bound by residues Gly-75 and Thr-78.

The protein belongs to the fluoride channel Fluc/FEX (TC 1.A.43) family.

Its subcellular location is the cell membrane. It catalyses the reaction fluoride(in) = fluoride(out). Its activity is regulated as follows. Na(+) is not transported, but it plays an essential structural role and its presence is essential for fluoride channel function. In terms of biological role, fluoride-specific ion channel. Important for reducing fluoride concentration in the cell, thus reducing its toxicity. The chain is Fluoride-specific ion channel FluC from Chloroflexus aurantiacus (strain ATCC 29366 / DSM 635 / J-10-fl).